Reading from the N-terminus, the 310-residue chain is MAVSVQDLLDKIHFHVIYSTETALQKEITTSEIMRPGLEMAGYFDYFTPERIQLFGMKEWSYMMTVVGDNRYDLLKKVMAKETPVVIVARNLEIPSEMVAAAKKADIVLLQSREATSRLNSVLTSFLDERLAERTTVHGVLMDIFGVGVLIQGASGIGKSETGLELVKRGHRLVADDRVDVFQRDAFTLSGEPAEILRNMIEIRGVGIIDVMSLFGAGAVKDSTDIDMVIYLEYYDKEKAFDRLGNAPTIVEFSDVEVPQTRIPVKTGRNVSVIVEAAVMNFRAKQMGFDATKTFEDRLTDLISHNKESQ.

Residues H138 and K159 contribute to the active site. Residue 153–160 (GASGIGKS) participates in ATP binding. Mg(2+) is bound at residue S160. D177 (proton acceptor; for phosphorylation activity. Proton donor; for dephosphorylation activity) is an active-site residue. Residues 201 to 210 (IEIRGVGIID) form an important for the catalytic mechanism of both phosphorylation and dephosphorylation region. E202 is a binding site for Mg(2+). R243 is an active-site residue. Residues 264–269 (PVKTGR) are important for the catalytic mechanism of dephosphorylation.

It belongs to the HPrK/P family. As to quaternary structure, homohexamer. Mg(2+) is required as a cofactor.

It carries out the reaction [HPr protein]-L-serine + ATP = [HPr protein]-O-phospho-L-serine + ADP + H(+). It catalyses the reaction [HPr protein]-O-phospho-L-serine + phosphate + H(+) = [HPr protein]-L-serine + diphosphate. Functionally, catalyzes the ATP- as well as the pyrophosphate-dependent phosphorylation of a specific serine residue in HPr, a phosphocarrier protein of the phosphoenolpyruvate-dependent sugar phosphotransferase system (PTS). HprK/P also catalyzes the pyrophosphate-producing, inorganic phosphate-dependent dephosphorylation (phosphorolysis) of seryl-phosphorylated HPr (P-Ser-HPr). The two antagonistic activities of HprK/P are regulated by several intracellular metabolites, which change their concentration in response to the absence or presence of rapidly metabolisable carbon sources (glucose, fructose, etc.) in the growth medium. Therefore, by controlling the phosphorylation state of HPr, HPrK/P is a sensor enzyme that plays a major role in the regulation of carbon metabolism and sugar transport: it mediates carbon catabolite repression (CCR), and regulates PTS-catalyzed carbohydrate uptake and inducer exclusion. The protein is HPr kinase/phosphorylase of Lactococcus lactis subsp. cremoris (strain SK11).